The chain runs to 173 residues: Large ribosomal subunit protein uL16 (173 aa).

The protein belongs to the universal ribosomal protein uL16 family.

This chain is Large ribosomal subunit protein uL16, found in Methanococcus maripaludis (strain DSM 14266 / JCM 13030 / NBRC 101832 / S2 / LL).